We begin with the raw amino-acid sequence, 566 residues long: Ubiquitin carboxyl-terminal hydrolase 21 (566 aa).

2 stretches are compositionally biased toward basic and acidic residues: residues 1 to 14 and 58 to 70; these read MPQA…RTRE and PPDE…ELGR. Disordered regions lie at residues 1-103 and 146-169; these read MPQA…LPLP and PEPP…PPTL. Low complexity-rich tracts occupy residues 71–81 and 151–160; these read GRTSGSRPRGP and LRRSTSLRRL. The Nuclear export signal signature appears at 134-152; that stretch reads ELGAALSRLALRPEPPTLR. The USP domain maps to 212 to 559; sequence VGLRNLGNTC…EGYVLFYQLM (348 aa). Residue cysteine 221 is the Nucleophile of the active site. Residues 324–349 form a disordered region; that stretch reads APPILASGPVPSPPRRGGGALHEEPE. Zn(2+) contacts are provided by cysteine 385, cysteine 388, cysteine 438, and cysteine 441. Residue histidine 519 is the Proton acceptor of the active site.

The protein belongs to the peptidase C19 family. USP21 subfamily. In terms of assembly, interacts with BEND3.

It is found in the cytoplasm. Its subcellular location is the nucleus. The catalysed reaction is Thiol-dependent hydrolysis of ester, thioester, amide, peptide and isopeptide bonds formed by the C-terminal Gly of ubiquitin (a 76-residue protein attached to proteins as an intracellular targeting signal).. Functionally, deubiquitinates histone H2A, a specific tag for epigenetic transcriptional repression, thereby acting as a coactivator. Deubiquitination of histone H2A releaves the repression of di- and trimethylation of histone H3 at 'Lys-4', resulting in regulation of transcriptional initiation. Regulates gene expression via histone H2A deubiquitination. Deubiquitinates BAZ2A/TIP5 leading to its stabilization. Also capable of removing NEDD8 from NEDD8 conjugates but has no effect on Sentrin-1 conjugates. Also acts as a negative regulator of the ribosome quality control (RQC) by mediating deubiquitination of 40S ribosomal proteins RPS10/eS10 and RPS20/uS10, thereby antagonizing ZNF598-mediated 40S ubiquitination. This chain is Ubiquitin carboxyl-terminal hydrolase 21, found in Mus musculus (Mouse).